We begin with the raw amino-acid sequence, 431 residues long: Enolase (431 aa).

Residue Gln-166 coordinates (2R)-2-phosphoglycerate. Glu-208 (proton donor) is an active-site residue. The Mg(2+) site is built by Asp-245, Glu-288, and Asp-315. (2R)-2-phosphoglycerate contacts are provided by Lys-340, Arg-369, Ser-370, and Lys-391. The active-site Proton acceptor is the Lys-340.

It belongs to the enolase family. Mg(2+) serves as cofactor.

It is found in the cytoplasm. The protein resides in the secreted. It localises to the cell surface. It catalyses the reaction (2R)-2-phosphoglycerate = phosphoenolpyruvate + H2O. Its pathway is carbohydrate degradation; glycolysis; pyruvate from D-glyceraldehyde 3-phosphate: step 4/5. Its function is as follows. Catalyzes the reversible conversion of 2-phosphoglycerate (2-PG) into phosphoenolpyruvate (PEP). It is essential for the degradation of carbohydrates via glycolysis. This Clostridium perfringens (strain ATCC 13124 / DSM 756 / JCM 1290 / NCIMB 6125 / NCTC 8237 / Type A) protein is Enolase.